Reading from the N-terminus, the 342-residue chain is Ankyrin repeat domain-containing protein 2A (342 aa).

Residues 1-41 form a disordered region; that stretch reads MASNSEKNPLLSDEKPKSTEENKSSKPESASGSSTSSAMPG. The span at 12–26 shows a compositional bias: basic and acidic residues; that stretch reads SDEKPKSTEENKSSK. Low complexity predominate over residues 27-37; the sequence is PESASGSSTSS. ANK repeat units follow at residues 217–246, 250–279, 283–312, and 316–342; these read EEES…NKDE, EGRT…SVNA, NKNT…AVTL, and DEKT…DAFL. The a 1,2-diacyl-3-O-(beta-D-galactosyl)-sn-glycerol site is built by His223 and Glu246. A 1,2-diacyl-sn-glycero-3-phospho-(1'-sn-glycerol)-binding residues include Tyr294 and Arg296.

Interacts with TOM20-4, CYTB5-E, CBR1, APX3, APX5, TOC34 and GRF6. Binds to chloroplast outer envelope membrane (OEM) protein targeting signals, as well as to chloroplasts. Interacts with OEP7. Binds to HSP17.8 via its ankyrin repeats, this interaction enhances chaperone activity and chloroplast binding. Also interacts with HSP17.4A, HSP17.6A and HSP18.1. Binds specifically to two chloroplast glycolipids, monogalactosyldiacylglycerol (MGDG) and phosphatidylglycerol (PG). In terms of tissue distribution, ubiquitously expressed at basal level.

It is found in the cytoplasm. Its subcellular location is the nucleus. The protein localises to the plastid. The protein resides in the chloroplast outer membrane. Functionally, exhibits chaperone activity toward chloroplast outer envelope membrane, mitochondrion outer membrane, endoplasmic reticulum membrane and peroxisomal proteins, by recruiting specific proteins containing a single transmembrane associated with an AKR2A-binding sequence (ABS) and subsequently binding glycolipids (e.g. monogalactosyldiacylglycerol (MGDG) and phosphatidylglycerol (PG)) present in the membrane of the target organelle. Seems to be involved in the regulation of hydrogen peroxide levels during biotic and abiotic stresses by optimizing the ascorbate peroxidase 3 (APX3) hydrogen peroxide-degrading activity. This regulation might be monitored by GRF6. Cytosolic targeting factor for chloroplast outer membrane (COM) proteins that mediates sorting and targeting of nascent chloroplast outer envelope membrane (OEM) proteins to the chloroplast. Facilitates the targeting of OEP7 to chloroplasts. Facilitates the targeting of APX3 to peroxisomes. Involved in cellular metabolism (e.g. peroxisome activity) and required for plant growth and development. The protein is Ankyrin repeat domain-containing protein 2A of Arabidopsis thaliana (Mouse-ear cress).